The chain runs to 409 residues: Glycosyltransferase GtfE (409 aa).

This sequence belongs to the glycosyltransferase 28 family.

Its pathway is antibiotic biosynthesis; vancomycin biosynthesis. In terms of biological role, D-glucosyltransferase that acts on the aglycone core, transferring D-glucose to the phenolic hydroxyl of OH-Phegly(4) to form a devancoaminyl-vancomycin (DVV) intermediate in the biosynthesis of glycopeptide antibiotic vancomycin. Also able to glycosylate A47934, an antibiotic with a teicoplanin-like heptapeptide, but lacking sugar residues. The protein is Glycosyltransferase GtfE (gtfE) of Amycolatopsis orientalis (Nocardia orientalis).